The following is a 591-amino-acid chain: MYSPKRVKLNLTNGMRKRPETEENRGELYPPTAMARNGISPYFIGKPRRKIVGDHKASEAGPPPPFPLKPKRKEPDDDPESIVIDEDDEEDEPAPQVEKREPKKTHNRPFFGEKSSLTATELETAKKEEVVKKKDPFTMRGFDFGSDEKVVKIRDKICDIVDPTGARRSDPAFIQQMHSNTLKGIEVATNPKFKQKRTANNKNRAAIGSTLGTIYPNFLTASGQEPQKSKFQIPLDRQSSSQSNHSQPIRKTLPEIPRRCSNSLVKKAMGMDTDGGGKDERMDGLRSEPTLKHFDENIISLIESEIMSVNNQIGWADVAGLEGAKKALKEIVVLPFQRPDIFTGLRAPPKGVLLFGPPGTGKTMIGRCVASQAQATFFNISASSLTSKWVGEGEKLVRALFSVARLKLPSVIFIDEIDSLLSARSESEHESSRRIKTEFLVQLDGVNTAPDERLLVLGATNRPQELDEAARRRFQKRLYIALPEPDSRTQIVENLLRGTRHEITDHNLEKIRRLTDGYSGADMRQLCTEAAMGPIREIGDQIATINKDDIRAVTVADFTEAARVVRPTVDDSQLDAYAAWDKKFGCLPPPL.

2 disordered regions span residues 1-117 and 223-249; these read MYSP…KSSL and GQEPQKSKFQIPLDRQSSSQSNHSQPI. The span at 17-26 shows a compositional bias: basic and acidic residues; that stretch reads KRPETEENRG. The span at 76-93 shows a compositional bias: acidic residues; that stretch reads DDDPESIVIDEDDEEDEP. The segment covering 237–249 has biased composition (polar residues); sequence RQSSSQSNHSQPI. ATP is bound by residues Ala-319 and 359–364; that span reads GTGKTM.

It belongs to the AAA ATPase family. Hexamer. Requires Mg(2+) as cofactor.

It is found in the nucleus. The enzyme catalyses ATP + H2O = ADP + phosphate + H(+). Its function is as follows. Has a role in spindle assembly which acts in the progression through mitosis during embryogenesis. Required for fertility. This is Fidgetin-like protein 1 (figl-1) from Caenorhabditis briggsae.